Consider the following 466-residue polypeptide: Siroheme synthase (466 aa).

Residues 1 to 203 (MNYLPIFIDI…GKIQEAKADL (203 aa)) form a precorrin-2 dehydrogenase /sirohydrochlorin ferrochelatase region. NAD(+)-binding positions include 22 to 23 (SI) and 43 to 44 (KS). S128 bears the Phosphoserine mark. Positions 216 to 466 (GAVYLVGGGP…FDAKPISSKK (251 aa)) are uroporphyrinogen-III C-methyltransferase. S-adenosyl-L-methionine is bound at residue P225. D248 serves as the catalytic Proton acceptor. Catalysis depends on K270, which acts as the Proton donor. S-adenosyl-L-methionine-binding positions include 301 to 303 (GGD), I306, 331 to 332 (TA), M383, and G412.

In the N-terminal section; belongs to the precorrin-2 dehydrogenase / sirohydrochlorin ferrochelatase family. It in the C-terminal section; belongs to the precorrin methyltransferase family.

The enzyme catalyses uroporphyrinogen III + 2 S-adenosyl-L-methionine = precorrin-2 + 2 S-adenosyl-L-homocysteine + H(+). It catalyses the reaction precorrin-2 + NAD(+) = sirohydrochlorin + NADH + 2 H(+). It carries out the reaction siroheme + 2 H(+) = sirohydrochlorin + Fe(2+). It participates in cofactor biosynthesis; adenosylcobalamin biosynthesis; precorrin-2 from uroporphyrinogen III: step 1/1. It functions in the pathway cofactor biosynthesis; adenosylcobalamin biosynthesis; sirohydrochlorin from precorrin-2: step 1/1. Its pathway is porphyrin-containing compound metabolism; siroheme biosynthesis; precorrin-2 from uroporphyrinogen III: step 1/1. The protein operates within porphyrin-containing compound metabolism; siroheme biosynthesis; siroheme from sirohydrochlorin: step 1/1. It participates in porphyrin-containing compound metabolism; siroheme biosynthesis; sirohydrochlorin from precorrin-2: step 1/1. Functionally, multifunctional enzyme that catalyzes the SAM-dependent methylations of uroporphyrinogen III at position C-2 and C-7 to form precorrin-2 via precorrin-1. Then it catalyzes the NAD-dependent ring dehydrogenation of precorrin-2 to yield sirohydrochlorin. Finally, it catalyzes the ferrochelation of sirohydrochlorin to yield siroheme. The protein is Siroheme synthase of Vesicomyosocius okutanii subsp. Calyptogena okutanii (strain HA).